A 436-amino-acid chain; its full sequence is MKLYDSYSNQLVEINDELISIYNCGPTVYNHIHIGNARPLITMDVLYRFLKKHNIKTKYVLNITDIDDKIINYALANNLKELEVSEYYFNEYLKIKKALNTLEMINPKVSTHMDKIIDYIQKLIDKQAGYFIGDDVYFDTKKALNYGQLSKRDLENDIVGMRIESAANKHNPNDFILWKKTNKGIMWNTPWGIGRPGWHSECSCLINTYIGEQVSIHGGGIDLKFPHHENENAQNQVLYNKNLAKVWMHFGLVNINNEKMSKSLNNFILVKDLLAEYDYQVVRWFFYQADYKQPIKFSHEIMKQNEKEILKIKNAIYNAKNYLYFNNQLKSLTQIDHFELFDERINDDLDFVGIVDLIHISVKKINILIKENKDMNELKLNLTQLLYMLDILGINFVDLHNDENLALLNTWKNYVDKKDYVKADELRKQLINIGIL.

Cys-24 lines the Zn(2+) pocket. The 'HIGH' region signature appears at 26–36 (PTVYNHIHIGN). Positions 202, 227, and 231 each coordinate Zn(2+). A 'KMSKS' region motif is present at residues 259–263 (KMSKS). An ATP-binding site is contributed by Lys-262.

This sequence belongs to the class-I aminoacyl-tRNA synthetase family. As to quaternary structure, monomer. Zn(2+) is required as a cofactor.

The protein localises to the cytoplasm. The catalysed reaction is tRNA(Cys) + L-cysteine + ATP = L-cysteinyl-tRNA(Cys) + AMP + diphosphate. This is Cysteine--tRNA ligase from Ureaplasma parvum serovar 3 (strain ATCC 700970).